The following is a 384-amino-acid chain: Sensor-like histidine kinase SenX3 (384 aa).

The Histidine kinase domain maps to 153–369 (NVSHELKTPV…TFTLSIPEYP (217 aa)). His-156 is subject to Phosphohistidine; by autocatalysis. The disordered stretch occupies residues 360–384 (TFTLSIPEYPDPESHSDEREDQRER). Residues 371 to 384 (PESHSDEREDQRER) are compositionally biased toward basic and acidic residues.

In terms of processing, autophosphorylated.

It localises to the cell membrane. The enzyme catalyses ATP + protein L-histidine = ADP + protein N-phospho-L-histidine.. In terms of biological role, member of the two-component regulatory system SenX3/RegX3 involved in stress response. The system is involved in phosphate starvation response. Probably exhibits a dual role as a phosphatase or a phosphodonor for the response regulator RegX3, depending upon phosphate availability. When environmental phosphate is abundant, SenX3 is required to maintain RegX3 in an unphosphorylated state, where it is unable to bind target DNA. Under conditions of phosphate limitation, SenX3 autophosphorylates and then transfers the phosphate group to RegX3. Probably does not itself sense phosphate concentrations, which may be relayed to SenX3 by the PstSCAB phosphate transporter system. The polypeptide is Sensor-like histidine kinase SenX3 (Mycolicibacterium smegmatis (strain ATCC 700084 / mc(2)155) (Mycobacterium smegmatis)).